The following is a 185-amino-acid chain: Large ribosomal subunit protein uL5m (185 aa).

Belongs to the universal ribosomal protein uL5 family.

The protein localises to the mitochondrion. The protein is Large ribosomal subunit protein uL5m (RPL5) of Brassica napus (Rape).